A 95-amino-acid chain; its full sequence is Protein FAM240C (95 aa).

Positions 68 to 95 are disordered; the sequence is KMLQGPGRCPDRVPEATESLHTKDKKAA. The segment covering 76-95 has biased composition (basic and acidic residues); the sequence is CPDRVPEATESLHTKDKKAA.

Belongs to the FAM240 family.

The chain is Protein FAM240C (FAM240C) from Homo sapiens (Human).